Here is a 400-residue protein sequence, read N- to C-terminus: Na(+)/H(+) antiporter NhaA (400 aa).

Transmembrane regions (helical) follow at residues 10-30, 60-80, 95-115, 126-146, 155-175, 178-198, 218-238, 265-285, 295-315, 334-354, and 364-384; these read FNLE…AMII, AHHW…GLEL, IILP…VYLF, GWAI…SLLG, VFLV…IALF, NDLS…LYML, IAVL…ALFI, GILP…AGFG, IAAG…WLIF, AALL…LAFA, and LGII…LKTT.

It belongs to the NhaA Na(+)/H(+) (TC 2.A.33) antiporter family.

The protein resides in the cell inner membrane. The catalysed reaction is Na(+)(in) + 2 H(+)(out) = Na(+)(out) + 2 H(+)(in). In terms of biological role, na(+)/H(+) antiporter that extrudes sodium in exchange for external protons. This is Na(+)/H(+) antiporter NhaA from Psychrobacter arcticus (strain DSM 17307 / VKM B-2377 / 273-4).